The chain runs to 644 residues: DNA mismatch repair protein MutL (644 aa).

2 disordered regions span residues 338-390 (RPNA…ERPA) and 416-445 (QPQEAAEEAAGTPAPPASSSPAMAETDDTQ). Composition is skewed to low complexity over residues 349–366 (EATPSTDATTATAAEASA) and 416–427 (QPQEAAEEAAGT).

This sequence belongs to the DNA mismatch repair MutL/HexB family.

This protein is involved in the repair of mismatches in DNA. It is required for dam-dependent methyl-directed DNA mismatch repair. May act as a 'molecular matchmaker', a protein that promotes the formation of a stable complex between two or more DNA-binding proteins in an ATP-dependent manner without itself being part of a final effector complex. This Chromohalobacter salexigens (strain ATCC BAA-138 / DSM 3043 / CIP 106854 / NCIMB 13768 / 1H11) protein is DNA mismatch repair protein MutL.